Reading from the N-terminus, the 639-residue chain is Chaperone protein DnaK (639 aa).

Threonine 198 carries the post-translational modification Phosphothreonine; by autocatalysis. Residues 597–639 (AYSAGQSAEGAPHAAGAEASAQSRTDDGVVDADFEEVDEKKGH) are disordered. Over residues 603–617 (SAEGAPHAAGAEASA) the composition is skewed to low complexity. The span at 624 to 633 (GVVDADFEEV) shows a compositional bias: acidic residues.

Belongs to the heat shock protein 70 family.

Functionally, acts as a chaperone. This chain is Chaperone protein DnaK, found in Rhodospirillum rubrum (strain ATCC 11170 / ATH 1.1.1 / DSM 467 / LMG 4362 / NCIMB 8255 / S1).